Consider the following 260-residue polypeptide: Shikimate dehydrogenase (NADP(+)) (260 aa).

Shikimate contacts are provided by residues 14–16 (SAS) and threonine 60. Lysine 64 acts as the Proton acceptor in catalysis. Residues asparagine 85 and aspartate 100 each contribute to the shikimate site. NADP(+) contacts are provided by residues 121 to 125 (GAGGA), 145 to 150 (NRTYER), and phenylalanine 201. Residue tyrosine 203 participates in shikimate binding. Glycine 225 provides a ligand contact to NADP(+).

This sequence belongs to the shikimate dehydrogenase family. As to quaternary structure, homodimer.

The catalysed reaction is shikimate + NADP(+) = 3-dehydroshikimate + NADPH + H(+). It functions in the pathway metabolic intermediate biosynthesis; chorismate biosynthesis; chorismate from D-erythrose 4-phosphate and phosphoenolpyruvate: step 4/7. In terms of biological role, involved in the biosynthesis of the chorismate, which leads to the biosynthesis of aromatic amino acids. Catalyzes the reversible NADPH linked reduction of 3-dehydroshikimate (DHSA) to yield shikimate (SA). The sequence is that of Shikimate dehydrogenase (NADP(+)) from Pyrobaculum neutrophilum (strain DSM 2338 / JCM 9278 / NBRC 100436 / V24Sta) (Thermoproteus neutrophilus).